The following is a 774-amino-acid chain: Probable ubiquitin-like-specific protease 2A (774 aa).

The interval 118–141 is disordered; it reads SSLSENDEVSTGEATNPASDPHEV. Catalysis depends on residues H400, D430, and C485. The segment at 548-568 is disordered; the sequence is ILPANSKSEPPHCGVSNRNDQ.

This sequence belongs to the peptidase C48 family.

Its function is as follows. Protease that catalyzes two essential functions in the SUMO pathway: processing of full-length SUMOs to their mature forms and deconjugation of SUMO from targeted proteins. This chain is Probable ubiquitin-like-specific protease 2A (ULP2A), found in Arabidopsis thaliana (Mouse-ear cress).